Consider the following 176-residue polypeptide: Large ribosomal subunit protein uL6 (176 aa).

A compositionally biased stretch (basic and acidic residues) spans 151–170 (RPPEPYKGKGVRYADEQVRR). Positions 151–176 (RPPEPYKGKGVRYADEQVRRKEAKKK) are disordered.

This sequence belongs to the universal ribosomal protein uL6 family. As to quaternary structure, part of the 50S ribosomal subunit.

Its function is as follows. This protein binds to the 23S rRNA, and is important in its secondary structure. It is located near the subunit interface in the base of the L7/L12 stalk, and near the tRNA binding site of the peptidyltransferase center. In Shewanella loihica (strain ATCC BAA-1088 / PV-4), this protein is Large ribosomal subunit protein uL6.